Consider the following 209-residue polypeptide: MSKVYVFDHPLIQHKLTYIRDKNTGTKEFRELVDEVATLMAFEITRDMPVEEIEIETPVTIAKTKVLSGKKLAIVPILRAGIGMVDGVLKLIPAAKVGHIGLYRDPETLKPVEYYAKLPADVEERDFIIVDPMLATGGSAVEAIHSLKKRGAKNIKFMCLIAAPEGVKAIQEEHSDVDIYIAALDEKLNDHGYIVPGLGDAGDRLFGTK.

Residues Arg79, Arg104, and 131 to 139 each bind 5-phospho-alpha-D-ribose 1-diphosphate; that span reads DPMLATGGS. Residues Ile194 and 199–201 contribute to the uracil site; that span reads GDA. Position 200 (Asp200) interacts with 5-phospho-alpha-D-ribose 1-diphosphate.

It belongs to the UPRTase family. Requires Mg(2+) as cofactor.

It catalyses the reaction UMP + diphosphate = 5-phospho-alpha-D-ribose 1-diphosphate + uracil. The protein operates within pyrimidine metabolism; UMP biosynthesis via salvage pathway; UMP from uracil: step 1/1. Allosterically activated by GTP. Catalyzes the conversion of uracil and 5-phospho-alpha-D-ribose 1-diphosphate (PRPP) to UMP and diphosphate. This Lysinibacillus sphaericus (strain C3-41) protein is Uracil phosphoribosyltransferase.